The primary structure comprises 182 residues: Caltractin ICL1b (182 aa).

The disordered stretch occupies residues 1–31 (MSRRGQQPPPQQQQAPPQKNQAGKFNPAEFV). EF-hand domains are found at residues 38–73 (EEVL…LGFE), 74–109 (AKNQ…RISE), 111–146 (DSKA…LGET), and 147–182 (MDDS…KTFA). 10 residues coordinate Ca(2+): aspartate 51, aspartate 53, threonine 55, serine 57, glutamate 62, aspartate 87, aspartate 89, serine 91, glutamine 93, and glutamate 98.

It belongs to the centrin family.

It is found in the cytoplasm. The protein localises to the cytoskeleton. In terms of biological role, plays a fundamental role in microtubule organizing center structure and function. Component of the infraciliary lattice (ICL) and the ciliary basal bodies. The chain is Caltractin ICL1b (Icl1b) from Paramecium tetraurelia.